Here is a 102-residue protein sequence, read N- to C-terminus: Pole-localizer protein TmaR (102 aa).

Positions 7–34 (IINQARRKNKLKRELQDNQKKIRDNQKR) form a coiled coil.

It belongs to the pole-localizer TmaR family.

The protein localises to the cytoplasm. Pole-localizer protein involved in the regulation of several cellular processes. This Aliivibrio fischeri (strain ATCC 700601 / ES114) (Vibrio fischeri) protein is Pole-localizer protein TmaR.